Consider the following 87-residue polypeptide: MAERGKRKFRTGIVVSDKSNKTRQVSVERTYRHSLYDRVLRSKSKFIVHDEKNISHVGDTVKIMESRPLSKMKRWVLVEVVNKTSEI.

It belongs to the universal ribosomal protein uS17 family. As to quaternary structure, part of the 30S ribosomal subunit.

In terms of biological role, one of the primary rRNA binding proteins, it binds specifically to the 5'-end of 16S ribosomal RNA. This Endomicrobium trichonymphae protein is Small ribosomal subunit protein uS17.